The chain runs to 153 residues: MSSEEGKLFVGGLNFNTDEQALEDHFSSFGPISEVVVVKDRETQRSRGFGFITFTNPEHASDAMRAMNGESLDGRQIRVDHAGKSARGSRGGAFGGRGRSYSRGGGDQGYGSGRYDSRPGGYGYGYGRSRDYSGSQGGYDRYSGGNYRDNYDN.

Residues 6–84 (GKLFVGGLNF…RQIRVDHAGK (79 aa)) enclose the RRM domain. An Omega-N-methylarginine modification is found at arginine 47. A disordered region spans residues 81–153 (HAGKSARGSR…GGNYRDNYDN (73 aa)). Residues 89-112 (SRGGAFGGRGRSYSRGGGDQGYGS) show a composition bias toward gly residues. At arginine 103 the chain carries Asymmetric dimethylarginine; alternate. A Dimethylated arginine; alternate modification is found at arginine 103. Arginine 103 is subject to Omega-N-methylarginine; alternate. Omega-N-methylarginine is present on residues arginine 118 and arginine 128. A phosphoserine mark is found at serine 133 and serine 143. Phosphotyrosine is present on tyrosine 151.

Interacts with RPL4. Associates with the 60S ribosomal subunits in an RNA-independent manner. Arg-103 is dimethylated, probably to asymmetric dimethylarginine. Post-translationally, phosphorylated.

It is found in the nucleus. The protein localises to the cytoplasm. Its subcellular location is the cell projection. The protein resides in the dendrite. Cold-inducible mRNA binding protein that enhances global protein synthesis at both physiological and mild hypothermic temperatures. Reduces the relative abundance of microRNAs, when overexpressed. Enhances phosphorylation of translation initiation factors and active polysome formation. This Mus musculus (Mouse) protein is RNA-binding protein 3 (Rbm3).